A 664-amino-acid chain; its full sequence is UV-stimulated scaffold protein A homolog (664 aa).

The interval 10–153 (KVIGLIEKAT…LKNTLKLKFP (144 aa)) is VHS-like. Residues 148-180 (LKLKFPDLQANAARIQRERQEREMKTKEILRNK) adopt a coiled-coil conformation. 2 disordered regions span residues 330-350 (HGNEETNEEEEDIWEEDDGKV) and 362-403 (MRTQ…GNSL). Residues 334-347 (ETNEEEEDIWEEDD) are compositionally biased toward acidic residues. Polar residues predominate over residues 363–374 (RTQQSENSSLPS). Residues 377 to 387 (EAKKSTSEARS) show a composition bias toward basic and acidic residues. Over residues 388–402 (NKVSNTKKVGSSGNS) the composition is skewed to polar residues. The UVSSA-type zinc-finger motif lies at 473–500 (TPPCRASLKKGGLCQRRDLRVCPFHGPI). Cys476, Cys486, Cys494, and His497 together coordinate Zn(2+). Disordered stretches follow at residues 514-546 (SPLDESENQTSSTSGTNQDVSMDETTSDSDPNQ) and 640-664 (VKGTNPQQLAQGNDEKCRDTSANQW). Composition is skewed to polar residues over residues 521–533 (NQTSSTSGTNQDV) and 640–650 (VKGTNPQQLAQ).

It belongs to the UVSSA family.

The protein localises to the chromosome. This is UV-stimulated scaffold protein A homolog from Arabidopsis thaliana (Mouse-ear cress).